The sequence spans 215 residues: MSKVYDWFEERLEIQAIADDITSKYVPPHVNIFYCLGGITLTCFLVQVATGFAMTFYYRPTVTEAFSSVQYIMTEANFGWLIRSVHRWSASMMVLMMILHVFRVYLTGGFKKPRELTWVTGVVLAVLTASFGVTGYSLPWDQIGYWAVKIVTGVPDAIPVIGSPLVELLRGSASVGQSTLTRFYSLHTFVLPLLTAVFMLMHFPMIRKQGISGPL.

Residues 32 to 52 form a helical membrane-spanning segment; it reads IFYCLGGITLTCFLVQVATGF. Cys35 is a heme c binding site. Residues His86 and His100 each contribute to the heme b site. The next 3 helical transmembrane spans lie at 90 to 110, 116 to 136, and 186 to 206; these read ASMMVLMMILHVFRVYLTGGF, LTWVTGVVLAVLTASFGVTGY, and LHTFVLPLLTAVFMLMHFPMI. Heme b-binding residues include His187 and His202.

Belongs to the cytochrome b family. PetB subfamily. The 4 large subunits of the cytochrome b6-f complex are cytochrome b6, subunit IV (17 kDa polypeptide, PetD), cytochrome f and the Rieske protein, while the 4 small subunits are PetG, PetL, PetM and PetN. The complex functions as a dimer. Heme b is required as a cofactor. Heme c serves as cofactor.

It is found in the plastid. Its subcellular location is the chloroplast thylakoid membrane. Functionally, component of the cytochrome b6-f complex, which mediates electron transfer between photosystem II (PSII) and photosystem I (PSI), cyclic electron flow around PSI, and state transitions. This chain is Cytochrome b6, found in Agrostis stolonifera (Creeping bentgrass).